The following is a 365-amino-acid chain: Mitogen-activated protein kinase HOG1A (365 aa).

The Protein kinase domain occupies 24–303; the sequence is YTDLQPVGMG…AADALAHPYL (280 aa). ATP-binding positions include 30-38 and Lys-53; that span reads VGMGAFGLL. Asp-145 serves as the catalytic Proton acceptor. Thr-175 bears the Phosphothreonine mark. Positions 175-177 match the TXY motif; the sequence is TGY. A Phosphotyrosine modification is found at Tyr-177.

The protein belongs to the protein kinase superfamily. Ser/Thr protein kinase family. MAP kinase subfamily. HOG1 sub-subfamily. Mg(2+) serves as cofactor. Phosphorylated. Dually phosphorylated on Thr-175 and Tyr-177, which activates the enzyme. Rapidly dephosphorylated upon either hypo- or hyperosmotic shock.

It localises to the cytoplasm. Its subcellular location is the nucleus. It catalyses the reaction L-seryl-[protein] + ATP = O-phospho-L-seryl-[protein] + ADP + H(+). The enzyme catalyses L-threonyl-[protein] + ATP = O-phospho-L-threonyl-[protein] + ADP + H(+). Its activity is regulated as follows. Activated by tyrosine and threonine phosphorylation. In terms of biological role, proline-directed serine/threonine-protein kinase involved in a signal transduction pathway that is activated by changes in the osmolarity of the extracellular environment. Controls osmotic regulation of transcription of target genes. The protein is Mitogen-activated protein kinase HOG1A (HOG1A) of Wallemia ichthyophaga (strain EXF-994 / CBS 113033).